The primary structure comprises 84 residues: Apoptosis inhibitor Rv3654c (84 aa).

The N-terminal stretch at 1 to 39 (MVARHRAQAAADLASLAAAARLPSGLAAACARATLVARA) is a signal peptide.

Interacts with human polypyrimidine tract binding protein-associated splicing factor (PSF).

The protein localises to the secreted. It is found in the host cytoplasm. Effector protein that participates in the suppression of macrophage apoptosis by blocking the extrinsic pathway. Recognizes the host polypyrimidine tract binding protein-associated splicing factor (PSF), which probably leads to its cleavage, diminishing the level of caspase-8 in macrophages. The polypeptide is Apoptosis inhibitor Rv3654c (Mycobacterium tuberculosis (strain ATCC 25618 / H37Rv)).